The sequence spans 205 residues: Holliday junction branch migration complex subunit RuvA (205 aa).

The domain I stretch occupies residues 1–64 (MIGKLKGVID…EDQIKLFGFR (64 aa)). The interval 65 to 143 (TDHEREWFRL…SFANVDPTVV (79 aa)) is domain II. The segment at 144–154 (HLAGDLDDQRA) is flexible linker. The interval 154-205 (APRPVRDAISALVNLGYGQPQATAAIAAASRGAGENAETAQLIRLGLKELSK) is domain III.

Belongs to the RuvA family. In terms of assembly, homotetramer. Forms an RuvA(8)-RuvB(12)-Holliday junction (HJ) complex. HJ DNA is sandwiched between 2 RuvA tetramers; dsDNA enters through RuvA and exits via RuvB. An RuvB hexamer assembles on each DNA strand where it exits the tetramer. Each RuvB hexamer is contacted by two RuvA subunits (via domain III) on 2 adjacent RuvB subunits; this complex drives branch migration. In the full resolvosome a probable DNA-RuvA(4)-RuvB(12)-RuvC(2) complex forms which resolves the HJ.

It is found in the cytoplasm. In terms of biological role, the RuvA-RuvB-RuvC complex processes Holliday junction (HJ) DNA during genetic recombination and DNA repair, while the RuvA-RuvB complex plays an important role in the rescue of blocked DNA replication forks via replication fork reversal (RFR). RuvA specifically binds to HJ cruciform DNA, conferring on it an open structure. The RuvB hexamer acts as an ATP-dependent pump, pulling dsDNA into and through the RuvAB complex. HJ branch migration allows RuvC to scan DNA until it finds its consensus sequence, where it cleaves and resolves the cruciform DNA. This is Holliday junction branch migration complex subunit RuvA from Nitrobacter winogradskyi (strain ATCC 25391 / DSM 10237 / CIP 104748 / NCIMB 11846 / Nb-255).